Consider the following 441-residue polypeptide: Xylose isomerase 1 (441 aa).

Catalysis depends on residues H105 and D108. Residues E236, E272, H275, D300, D311, D313, and D343 each contribute to the Mg(2+) site.

The protein belongs to the xylose isomerase family. As to quaternary structure, homotetramer. It depends on Mg(2+) as a cofactor.

It localises to the cytoplasm. The catalysed reaction is alpha-D-xylose = alpha-D-xylulofuranose. The chain is Xylose isomerase 1 (xylA1) from Xanthomonas axonopodis pv. citri (strain 306).